Consider the following 135-residue polypeptide: BolA-like protein 1 (135 aa).

Serine 81 carries the post-translational modification Phosphoserine. Residues 114-135 (WKENPQLDTSPACLGGSKKSRN) are disordered.

It belongs to the BolA/IbaG family. As to quaternary structure, interacts with GLRX5.

The protein localises to the mitochondrion. Its function is as follows. Acts as a mitochondrial iron-sulfur (Fe-S) cluster assembly factor that facilitates (Fe-S) cluster insertion into a subset of mitochondrial proteins. Probably acts together with the monothiol glutaredoxin GLRX5. May protect cells against oxidative stress. The protein is BolA-like protein 1 (BOLA1) of Bos taurus (Bovine).